A 254-amino-acid polypeptide reads, in one-letter code: Hydroxyacylglutathione hydrolase (254 aa).

Positions 54, 56, 58, 59, 111, 130, and 168 each coordinate Zn(2+).

Belongs to the metallo-beta-lactamase superfamily. Glyoxalase II family. In terms of assembly, monomer. Zn(2+) serves as cofactor.

It catalyses the reaction an S-(2-hydroxyacyl)glutathione + H2O = a 2-hydroxy carboxylate + glutathione + H(+). It functions in the pathway secondary metabolite metabolism; methylglyoxal degradation; (R)-lactate from methylglyoxal: step 2/2. Functionally, thiolesterase that catalyzes the hydrolysis of S-D-lactoyl-glutathione to form glutathione and D-lactic acid. This is Hydroxyacylglutathione hydrolase from Legionella pneumophila (strain Corby).